Here is a 54-residue protein sequence, read N- to C-terminus: U-myrmicitoxin(01)-Tb5a (54 aa).

Positions 1 to 26 (MQLSHLLLAFAMIFVMTIMYAPQVQA) are cleaved as a signal peptide. A propeptide spanning residues 27 to 38 (DAWADANADADV) is cleaved from the precursor.

Belongs to the formicidae venom precursor-01 superfamily. Contains 1 disulfide bond. Expressed by the venom gland.

It is found in the secreted. The chain is U-myrmicitoxin(01)-Tb5a from Tetramorium bicarinatum (Tramp ant).